Consider the following 484-residue polypeptide: Cobyric acid synthase (484 aa).

The region spanning 251 to 438 (ALKIAVPVLP…LHGLFASDAY (188 aa)) is the GATase cobBQ-type domain. Catalysis depends on cysteine 333, which acts as the Nucleophile. Histidine 430 is an active-site residue.

Belongs to the CobB/CobQ family. CobQ subfamily.

It participates in cofactor biosynthesis; adenosylcobalamin biosynthesis. Catalyzes amidations at positions B, D, E, and G on adenosylcobyrinic A,C-diamide. NH(2) groups are provided by glutamine, and one molecule of ATP is hydrogenolyzed for each amidation. The chain is Cobyric acid synthase from Rhizobium etli (strain CIAT 652).